Consider the following 654-residue polypeptide: Protein fem-1 homolog A (654 aa).

ANK repeat units lie at residues 2 to 31, 40 to 70, 82 to 111, 115 to 145, 149 to 178, 182 to 211, and 214 to 243; these read DLHT…REEI, GGGT…SVEA, EGAP…SVNR, TNST…DLEV, HGHT…QVNR, KGNT…RMER, and YGMT…GHGQ. Ser108 bears the Phosphoserine mark. The segment at 241 to 265 is disordered; that stretch reads HGQLSGTELPGEGSSQMAGNHCSTP. A compositionally biased stretch (polar residues) spans 253–263; that stretch reads GSSQMAGNHCS. 2 TPR repeats span residues 283–317 and 375–408; these read VEAL…RHQG and SYYI…QQNN. ANK repeat units lie at residues 519–561 and 565–594; these read NGFT…DPDS and DNNT…HMDA. Ser608 is modified (phosphoserine).

The protein belongs to the fem-1 family. As to quaternary structure, component of a CRL2 E3 ubiquitin-protein ligase complex, also named ECS (Elongin BC-CUL2/5-SOCS-box protein) complex, composed of CUL2, Elongin BC (ELOB and ELOC), RBX1 and substrate-specific adapter FEM1A. Interacts with PTGER4. Interacts with NFKB1; the interaction is direct. In terms of processing, phosphorylated; highly phosphorylated in myoblasts and myotubes. Phosphorylation at Ser-108 and Ser-608 promote PGE2-EP4-mediated inhibition of inflammation. Dephosphorylated by protein phosphatase 2A (PP2A).

It localises to the mitochondrion. The protein resides in the cytoplasm. The protein operates within protein modification; protein ubiquitination. Functionally, substrate-recognition component of a Cul2-RING (CRL2) E3 ubiquitin-protein ligase complex of the DesCEND (destruction via C-end degrons) pathway, which recognizes a C-degron located at the extreme C terminus of target proteins, leading to their ubiquitination and degradation. The C-degron recognized by the DesCEND pathway is usually a motif of less than ten residues and can be present in full-length proteins, truncated proteins or proteolytically cleaved forms. The CRL2(FEM1A) complex specifically recognizes proteins with an arginine at the C-terminus: recognizes and binds proteins ending with -Lys/Arg-Xaa-Arg and -Lys/Arg-Xaa-Xaa-Arg C-degrons, such as SIL1 or OR51B2, leading to their ubiquitination and degradation. Involved in PGE2-EP4-mediated inhibition of inflammation of macrophages via interaction with NFKB1 and PTGER4. Promotes inflammation in brain microglia through MAP2K4/MKK4-mediated signaling. In Rattus norvegicus (Rat), this protein is Protein fem-1 homolog A.